The sequence spans 388 residues: GTPase Obg (388 aa).

Positions 1–159 constitute an Obg domain; sequence MKFVDEATIR…RSLRLELMLL (159 aa). Residues 160–333 enclose the OBG-type G domain; the sequence is ADVGLLGMPN…LALKLLDFID (174 aa). GTP is bound by residues 166 to 173, 191 to 195, 213 to 216, 283 to 286, and 314 to 316; these read GMPNAGKS, FTTLV, DIPG, NKAD, and SAY. Residues Ser173 and Thr193 each coordinate Mg(2+). The disordered stretch occupies residues 356-377; sequence QNANESVNEDYDDDLDDDDYDD. The span at 362 to 377 shows a compositional bias: acidic residues; that stretch reads VNEDYDDDLDDDDYDD.

This sequence belongs to the TRAFAC class OBG-HflX-like GTPase superfamily. OBG GTPase family. As to quaternary structure, monomer. Requires Mg(2+) as cofactor.

It localises to the cytoplasm. In terms of biological role, an essential GTPase which binds GTP, GDP and possibly (p)ppGpp with moderate affinity, with high nucleotide exchange rates and a fairly low GTP hydrolysis rate. Plays a role in control of the cell cycle, stress response, ribosome biogenesis and in those bacteria that undergo differentiation, in morphogenesis control. The protein is GTPase Obg of Shewanella piezotolerans (strain WP3 / JCM 13877).